Consider the following 274-residue polypeptide: Large ribosomal subunit protein uL2cz/uL2cy (274 aa).

2 disordered regions span residues 1 to 21 (MAIH…VDSQ) and 224 to 274 (NPVD…RRSK).

It belongs to the universal ribosomal protein uL2 family. In terms of assembly, part of the 50S ribosomal subunit.

Its subcellular location is the plastid. It localises to the chloroplast. The protein is Large ribosomal subunit protein uL2cz/uL2cy (rpl2-A) of Populus trichocarpa (Western balsam poplar).